The sequence spans 131 residues: Ribosome-binding factor A (131 aa).

It belongs to the RbfA family. As to quaternary structure, monomer. Binds 30S ribosomal subunits, but not 50S ribosomal subunits or 70S ribosomes.

The protein resides in the cytoplasm. One of several proteins that assist in the late maturation steps of the functional core of the 30S ribosomal subunit. Associates with free 30S ribosomal subunits (but not with 30S subunits that are part of 70S ribosomes or polysomes). Required for efficient processing of 16S rRNA. May interact with the 5'-terminal helix region of 16S rRNA. This is Ribosome-binding factor A from Gloeothece citriformis (strain PCC 7424) (Cyanothece sp. (strain PCC 7424)).